Consider the following 113-residue polypeptide: UPF0342 protein SMU_782 (113 aa).

The protein belongs to the UPF0342 family.

The polypeptide is UPF0342 protein SMU_782 (Streptococcus mutans serotype c (strain ATCC 700610 / UA159)).